A 274-amino-acid chain; its full sequence is Undecaprenyl-diphosphatase 1 (274 aa).

Transmembrane regions (helical) follow at residues 7–27 (LEIFKAVILGIVQGITEWLPV), 48–68 (FISTFLVVIQFGSILAVLVIF), 88–108 (VRLWLKVIIAVIPSGVIGILF), 115–135 (LFFNSTVVAIALIVYGIIMIG), 151–171 (VTYKLALCIGLFQCLALIPGT), 189–209 (YVAAEFSFFLAIPTMLGASAL), 221–241 (FEWLILGVGSVVAFVVSIVVI), and 253–273 (FKVFGYYRIVLGIVVLAYFFL).

The protein belongs to the UppP family.

The protein localises to the cell membrane. It catalyses the reaction di-trans,octa-cis-undecaprenyl diphosphate + H2O = di-trans,octa-cis-undecaprenyl phosphate + phosphate + H(+). Functionally, catalyzes the dephosphorylation of undecaprenyl diphosphate (UPP). Confers resistance to bacitracin. This chain is Undecaprenyl-diphosphatase 1, found in Clostridioides difficile (strain 630) (Peptoclostridium difficile).